A 423-amino-acid polypeptide reads, in one-letter code: UDP-N-acetylglucosamine 1-carboxyvinyltransferase (423 aa).

Residue 22-23 participates in phosphoenolpyruvate binding; that stretch reads KN. R93 is a UDP-N-acetyl-alpha-D-glucosamine binding site. C117 functions as the Proton donor in the catalytic mechanism. Residue C117 is modified to 2-(S-cysteinyl)pyruvic acid O-phosphothioketal. UDP-N-acetyl-alpha-D-glucosamine is bound by residues D305 and I327.

The protein belongs to the EPSP synthase family. MurA subfamily.

The protein resides in the cytoplasm. It catalyses the reaction phosphoenolpyruvate + UDP-N-acetyl-alpha-D-glucosamine = UDP-N-acetyl-3-O-(1-carboxyvinyl)-alpha-D-glucosamine + phosphate. The protein operates within cell wall biogenesis; peptidoglycan biosynthesis. Functionally, cell wall formation. Adds enolpyruvyl to UDP-N-acetylglucosamine. The protein is UDP-N-acetylglucosamine 1-carboxyvinyltransferase of Acidithiobacillus ferrooxidans (strain ATCC 23270 / DSM 14882 / CIP 104768 / NCIMB 8455) (Ferrobacillus ferrooxidans (strain ATCC 23270)).